The following is a 41-amino-acid chain: Large ribosomal subunit protein bL36 (41 aa).

Belongs to the bacterial ribosomal protein bL36 family.

The polypeptide is Large ribosomal subunit protein bL36 (Novosphingobium aromaticivorans (strain ATCC 700278 / DSM 12444 / CCUG 56034 / CIP 105152 / NBRC 16084 / F199)).